A 351-amino-acid polypeptide reads, in one-letter code: Mediator of RNA polymerase II transcription subunit 18 (351 aa).

The disordered stretch occupies residues Gly153–Ser231. Residues Asn163–Asp204 are compositionally biased toward basic and acidic residues. A compositionally biased stretch (acidic residues) spans Asn205 to Asn216. Residues Pro217–Ser231 are compositionally biased toward polar residues.

Belongs to the Mediator complex subunit 18 family. Component of the Mediator complex.

Its subcellular location is the nucleus. Component of the Mediator complex, a coactivator involved in the regulated transcription of nearly all RNA polymerase II-dependent genes. Mediator functions as a bridge to convey information from gene-specific regulatory proteins to the basal RNA polymerase II transcription machinery. Mediator is recruited to promoters by direct interactions with regulatory proteins and serves as a scaffold for the assembly of a functional preinitiation complex with RNA polymerase II and the general transcription factors. The chain is Mediator of RNA polymerase II transcription subunit 18 (SRB5) from Candida albicans (strain SC5314 / ATCC MYA-2876) (Yeast).